The following is a 510-amino-acid chain: 2,3-bisphosphoglycerate-independent phosphoglycerate mutase (510 aa).

Mn(2+) is bound by residues aspartate 12 and serine 62. Catalysis depends on serine 62, which acts as the Phosphoserine intermediate. Substrate contacts are provided by residues histidine 121, 151-152 (RD), arginine 183, arginine 189, 258-261 (RPDR), and lysine 331. Mn(2+) contacts are provided by aspartate 398, histidine 402, aspartate 439, histidine 440, and histidine 458.

It belongs to the BPG-independent phosphoglycerate mutase family. Monomer. Mn(2+) is required as a cofactor.

The catalysed reaction is (2R)-2-phosphoglycerate = (2R)-3-phosphoglycerate. It participates in carbohydrate degradation; glycolysis; pyruvate from D-glyceraldehyde 3-phosphate: step 3/5. Catalyzes the interconversion of 2-phosphoglycerate and 3-phosphoglycerate. The sequence is that of 2,3-bisphosphoglycerate-independent phosphoglycerate mutase from Clostridioides difficile (strain 630) (Peptoclostridium difficile).